A 329-amino-acid polypeptide reads, in one-letter code: Adenylate isopentenyltransferase 7, mitochondrial (329 aa).

The N-terminal 40 residues, 1–40 (MKFSISSLKQVQPILCFKNKLSKVNVNSFLHPKEKVIFVM), are a transit peptide targeting the mitochondrion. Residue 41 to 48 (GATGSGKS) participates in ATP binding.

It belongs to the IPP transferase family. As to expression, expressed in both the vascular stele and the phloem companion cells of the root, in endodermis of the root elongation zone, trichomes on young leaves, and some pollen tubes.

It is found in the mitochondrion. It carries out the reaction dimethylallyl diphosphate + ADP = N(6)-(dimethylallyl)adenosine 5'-diphosphate + diphosphate. It catalyses the reaction dimethylallyl diphosphate + ATP = N(6)-(dimethylallyl)adenosine 5'-triphosphate + diphosphate. Its function is as follows. Involved in cytokinin biosynthesis. Catalyzes the transfer of an isopentenyl group from dimethylallyl diphosphate (DMAPP) to ATP and ADP. This chain is Adenylate isopentenyltransferase 7, mitochondrial (IPT7), found in Arabidopsis thaliana (Mouse-ear cress).